Reading from the N-terminus, the 596-residue chain is MSGSFSPCVVFTQMWLTLLVVTPVNGQHEAAQQSVVSLQPPWTTFFRGEVVTLTCYRFGFSVPQKTKWYQKRKTVKQTPGALVIKAHTLKVHESGEYWCQADSLLPSMHVNVEFSEDFLVLQAPPAVFEGDSVVLRCYAKKGIEAETLTFYKDGKALTLHPQSSEFYIHRANLKDNGQYKCTSKKKWSFGSLYTSNTVVVQVQELFPRPVLRARPSHPIDGSPVTLTCQTQLSAQKSDARLQFCFFRNLQLLGSGCSRSSEFHIPAIWTEESKRYQCKAETVNSQVSKQSTAFIIPVQRASARFQTHIIPASKLVFEGQLLLLNCSVKGVPGPLKFSWYKKDMLNKETKILKSSNAEFKISQVNISDAGEYYCEANNSRRSFVSRAFPITIKVPVSQPVLTLSTGKTQALEGDLMTLHCQSQRGSPCILYEFFYENVSLGNSSILSGGGAYFNFSMSTERSGNYYCTADNGLGAQCSEAIRISIFDMTKNRSVPMAAGITVGLLIMAVGVFLFYCWFSRKAGGKPTSDDSRNPSDSEPQEPTYYNVPACIELQPVYSNEPEENVIYTEVRRTQPRQKHADQESESPRSRCQMAEKK.

A signal peptide spans 1-26 (MSGSFSPCVVFTQMWLTLLVVTPVNG). Over 27-496 (QHEAAQQSVV…MTKNRSVPMA (470 aa)) the chain is Extracellular. 5 consecutive Ig-like C2-type domains span residues 34-115 (SVVS…VEFS), 106-199 (PSMH…NTVV), 207-294 (PRPV…TAFI), 296-384 (PVQR…SFVS), and 398-483 (PVLT…IRIS). Cystine bridges form between C55–C99, C137–C181, and C228–C277. N-linked (GlcNAc...) asparagine glycosylation is present at N324. 2 disulfide bridges follow: C325-C373 and C419-C466. N-linked (GlcNAc...) asparagine glycosylation is present at N436. A helical membrane pass occupies residues 497 to 517 (AGITVGLLIMAVGVFLFYCWF). Over 518–596 (SRKAGGKPTS…RSRCQMAEKK (79 aa)) the chain is Cytoplasmic. 2 disordered regions span residues 522 to 544 (GGKP…PTYY) and 561 to 596 (EENV…AEKK). Over residues 577-596 (KHADQESESPRSRCQMAEKK) the composition is skewed to basic and acidic residues.

In terms of assembly, interacts with CR2. Interacts with CD19. In terms of processing, phosphorylated on cytoplasmic tyrosines; required for interaction with protein tyrosine phosphatases and protein tyrosine kinases. Preferentially expressed in marginal zone B cells.

It is found in the cell membrane. Plays an important role in B-cell response to antigen that acts both as a negative or positive coreceptor. Inhibits B-cell receptor (BCR) signaling in the absence of CR2 stimulation but engagement with CR2 and the BCR lead to a superior calcium response compared to CR2 and BCR costimulation. May be involved in B-cell development and differentiation in peripheral lymphoid organs and may be useful markers of B-cell stages. May have an immunoregulatory role in marginal zone B-cells. May play a role in fertilization. The chain is Fc receptor-like protein 5 (Fcrl5) from Mus musculus (Mouse).